The sequence spans 78 residues: UPF0291 protein Exig_1097 (78 aa).

Residues 57–78 form a disordered region; the sequence is EEGTDVTPEKLKQAQEEERNKQ. The span at 63 to 78 shows a compositional bias: basic and acidic residues; that stretch reads TPEKLKQAQEEERNKQ.

Belongs to the UPF0291 family.

The protein resides in the cytoplasm. The polypeptide is UPF0291 protein Exig_1097 (Exiguobacterium sibiricum (strain DSM 17290 / CCUG 55495 / CIP 109462 / JCM 13490 / 255-15)).